The sequence spans 491 residues: Probable cobyric acid synthase (491 aa).

One can recognise a GATase cobBQ-type domain in the interval 252-444 (PVEVNIVKFS…LHGILENFEF (193 aa)). C330 acts as the Nucleophile in catalysis. The active site involves H436.

The protein belongs to the CobB/CobQ family. CobQ subfamily.

It functions in the pathway cofactor biosynthesis; adenosylcobalamin biosynthesis. Catalyzes amidations at positions B, D, E, and G on adenosylcobyrinic A,C-diamide. NH(2) groups are provided by glutamine, and one molecule of ATP is hydrogenolyzed for each amidation. This chain is Probable cobyric acid synthase, found in Methanococcus vannielii (strain ATCC 35089 / DSM 1224 / JCM 13029 / OCM 148 / SB).